Here is a 145-residue protein sequence, read N- to C-terminus: Putative esterase PA1618 (145 aa).

The protein belongs to the thioesterase PaaI family.

The sequence is that of Putative esterase PA1618 from Pseudomonas aeruginosa (strain ATCC 15692 / DSM 22644 / CIP 104116 / JCM 14847 / LMG 12228 / 1C / PRS 101 / PAO1).